The primary structure comprises 440 residues: 23S rRNA (uracil(1939)-C(5))-methyltransferase RlmD (440 aa).

The TRAM domain maps to 6-64 (PIHNAQPEQVFIESLDTEGRGIARVEGKVLFVDGALPGERVWARRTQNHKSFDRAELLQ). Residues cysteine 77, cysteine 83, cysteine 86, and cysteine 164 each coordinate [4Fe-4S] cluster. S-adenosyl-L-methionine is bound by residues glutamine 273, phenylalanine 302, asparagine 307, glutamate 323, aspartate 351, and aspartate 372. The Nucleophile role is filled by cysteine 397.

It belongs to the class I-like SAM-binding methyltransferase superfamily. RNA M5U methyltransferase family. RlmD subfamily.

The catalysed reaction is uridine(1939) in 23S rRNA + S-adenosyl-L-methionine = 5-methyluridine(1939) in 23S rRNA + S-adenosyl-L-homocysteine + H(+). Functionally, catalyzes the formation of 5-methyl-uridine at position 1939 (m5U1939) in 23S rRNA. The chain is 23S rRNA (uracil(1939)-C(5))-methyltransferase RlmD from Acidithiobacillus ferrooxidans (strain ATCC 23270 / DSM 14882 / CIP 104768 / NCIMB 8455) (Ferrobacillus ferrooxidans (strain ATCC 23270)).